The sequence spans 298 residues: Cyclin-dependent kinase 2 (298 aa).

Position 1 is an N-acetylmethionine (M1). In terms of domain architecture, Protein kinase spans 4-286 (FQKVEKIGEG…AKAALAHPFF (283 aa)). Residue K6 is modified to N6-acetyllysine. 10 to 18 (IGEGTYGVV) lines the ATP pocket. The residue at position 14 (T14) is a Phosphothreonine. At Y15 the chain carries Phosphotyrosine; by WEE1. Position 19 is a phosphotyrosine (Y19). Residues K33, 81–83 (EFL), and D86 each bind ATP. The Proton acceptor role is filled by D127. ATP-binding positions include 129–132 (KPQN) and D145. The Mg(2+) site is built by N132 and D145. At T160 the chain carries Phosphothreonine; by CAK and CCRK.

The protein belongs to the protein kinase superfamily. CMGC Ser/Thr protein kinase family. CDC2/CDKX subfamily. In terms of assembly, found in a complex with CABLES1, CCNA1 and CCNE1. Interacts with CABLES1. Interacts with UHRF2. Part of a complex consisting of UHRF2, CDK2 and CCNE1. Interacts with the Speedy/Ringo proteins SPDYA and SPDYC. Interaction with SPDYA promotes kinase activation via a conformation change that alleviates obstruction of the substrate-binding cleft by the T-loop. Found in a complex with both SPDYA and CDKN1B/KIP1. Binds to RB1 and CDK7. Binding to CDKN1A (p21) leads to CDK2/cyclin E inactivation at the G1-S phase DNA damage checkpoint, thereby arresting cells at the G1-S transition during DNA repair. Associated with PTPN6 and beta-catenin/CTNNB1. Interacts with CACUL1. May interact with CEP63. Interacts with ANKRD17. Interacts with CEBPA (when phosphorylated). Forms a ternary complex with CCNA2 and CDKN1B; CDKN1B inhibits the kinase activity of CDK2 through conformational rearrangements. Interacts with cyclins A, B1, B3, D, or E. Interacts with CDK2AP2. Requires Mg(2+) as cofactor. In terms of processing, phosphorylated at Thr-160 by CDK7 in a CAK complex. Phosphorylation at Thr-160 promotes kinase activity, whereas phosphorylation at Tyr-15 by WEE1 reduces slightly kinase activity. Phosphorylated on Thr-14 and Tyr-15 during S and G2 phases before being dephosphorylated by CDC25A. Post-translationally, nitrosylated after treatment with nitric oxide (DETA-NO).

It is found in the cytoplasm. Its subcellular location is the cytoskeleton. It localises to the microtubule organizing center. The protein resides in the centrosome. The protein localises to the nucleus. It is found in the cajal body. Its subcellular location is the endosome. The enzyme catalyses L-seryl-[protein] + ATP = O-phospho-L-seryl-[protein] + ADP + H(+). It carries out the reaction L-threonyl-[protein] + ATP = O-phospho-L-threonyl-[protein] + ADP + H(+). Phosphorylation at Thr-14 or Tyr-15 inactivates the enzyme, while phosphorylation at Thr-160 activates it. Inhibited by 1,25-dihydroxyvitamin D(3) (1,25-(OH)(2)D(3)), AG-024322, N-(4-Piperidinyl)-4-(2,6-dichlorobenzoylamino)-1H-pyrazole-3-carboxamide (AT7519), R547 (Ro-4584820), purine, pyrimidine and pyridine derivatives, 2-aminopyrimidines, paullones, thiazo derivatives, macrocyclic quinoxalin-2-one, pyrazolo[1,5-a]-1,3,5-triazine, pyrazolo[1,5-a]pyrimidine, 2-(1-ethyl-2-hydroxyethylamino)-6-benzylamino-9-isopropylpurine (roscovitine, seliciclib and CYC202), SNS-032 (BMS-387032), triazolo[1,5-a]pyrimidines, staurosporine and olomoucine. Stimulated by MYC. Inactivated by CDKN1A (p21). In terms of biological role, serine/threonine-protein kinase involved in the control of the cell cycle; essential for meiosis, but dispensable for mitosis. Phosphorylates CABLES1, CTNNB1, CDK2AP2, ERCC6, NBN, USP37, p53/TP53, NPM1, CDK7, RB1, BRCA2, MYC, NPAT, EZH2. Triggers duplication of centrosomes and DNA. Acts at the G1-S transition to promote the E2F transcriptional program and the initiation of DNA synthesis, and modulates G2 progression; controls the timing of entry into mitosis/meiosis by controlling the subsequent activation of cyclin B/CDK1 by phosphorylation, and coordinates the activation of cyclin B/CDK1 at the centrosome and in the nucleus. Crucial role in orchestrating a fine balance between cellular proliferation, cell death, and DNA repair in embryonic stem cells (ESCs). Activity of CDK2 is maximal during S phase and G2; activated by interaction with cyclin E during the early stages of DNA synthesis to permit G1-S transition, and subsequently activated by cyclin A2 (cyclin A1 in germ cells) during the late stages of DNA replication to drive the transition from S phase to mitosis, the G2 phase. EZH2 phosphorylation promotes H3K27me3 maintenance and epigenetic gene silencing. Cyclin E/CDK2 prevents oxidative stress-mediated Ras-induced senescence by phosphorylating MYC. Involved in G1-S phase DNA damage checkpoint that prevents cells with damaged DNA from initiating mitosis; regulates homologous recombination-dependent repair by phosphorylating BRCA2, this phosphorylation is low in S phase when recombination is active, but increases as cells progress towards mitosis. In response to DNA damage, double-strand break repair by homologous recombination a reduction of CDK2-mediated BRCA2 phosphorylation. Involved in regulation of telomere repair by mediating phosphorylation of NBN. Phosphorylation of RB1 disturbs its interaction with E2F1. NPM1 phosphorylation by cyclin E/CDK2 promotes its dissociates from unduplicated centrosomes, thus initiating centrosome duplication. Cyclin E/CDK2-mediated phosphorylation of NPAT at G1-S transition and until prophase stimulates the NPAT-mediated activation of histone gene transcription during S phase. Required for vitamin D-mediated growth inhibition by being itself inactivated. Involved in the nitric oxide- (NO) mediated signaling in a nitrosylation/activation-dependent manner. USP37 is activated by phosphorylation and thus triggers G1-S transition. CTNNB1 phosphorylation regulates insulin internalization. Phosphorylates FOXP3 and negatively regulates its transcriptional activity and protein stability. Phosphorylates ERCC6 which is essential for its chromatin remodeling activity at DNA double-strand breaks. Acts as a regulator of the phosphatidylinositol 3-kinase/protein kinase B signal transduction by mediating phosphorylation of the C-terminus of protein kinase B (PKB/AKT1 and PKB/AKT2), promoting its activation. The polypeptide is Cyclin-dependent kinase 2 (CDK2) (Homo sapiens (Human)).